Here is a 283-residue protein sequence, read N- to C-terminus: MFS-type transporter eupM (283 aa).

7 helical membrane-spanning segments follow: residues 68 to 88 (LVAW…WGAM), 111 to 131 (IAWI…VAGP), 136 to 156 (GGFK…YMML), 165 to 185 (VLLA…TPMI), 196 to 216 (IGLA…VYPI), 227 to 247 (FAWT…IPII), and 263 to 283 (LIDL…ATMI).

The protein belongs to the major facilitator superfamily. Monocarboxylate porter (TC 2.A.1.13) family.

The protein resides in the membrane. Functionally, MFS-type transporter; part of the gene cluster that mediates the biosynthesis of eupenifeldin, a bistropolone meroterpenoid that acts as an antitumor agent. This Phoma sp protein is MFS-type transporter eupM.